Reading from the N-terminus, the 302-residue chain is Nitrophorin Cim l NP (302 aa).

A signal peptide spans 1–20; it reads MKLLLSAGAALAFVLGLCAA. Heme is bound at residue Cys80.

Heme b is required as a cofactor. In terms of processing, the N-terminus is blocked. Expressed in salivary glands.

Its subcellular location is the secreted. Heme-based protein that delivers nitric oxide gas (NO) to the victim while feeding, resulting in vasodilation. In place of heme, the heme-binding cysteine can also reversibly bind NO when it is present in high concentrations. The polypeptide is Nitrophorin Cim l NP (Cimex lectularius (Bed bug)).